Reading from the N-terminus, the 269-residue chain is MQAWVIGNWKQNPATSHDVDALLNELCTAISTTKQLSHNNSTRCQIMVAPSFLHLAAVSSRLKDTSVLCAAQDVSAYSASVGAYTGDCSAQQIADVGATWTILGHSERRQYHQESNDTLLQKMTHALTQELGVVFCIGETQAQYDAKQTLPVIDSQLAVVKKLIAEQPEVIDSLSTRLIIAYEPVWAIGTGKVPTVSEVSATHQYIKQTLAGFADSLSNMTVLYGGSVNADNADSFAADPMIHGALVGGASLKAESFLAIVTAFSKGSM.

Residue 8–10 (NWK) coordinates substrate. Histidine 105 acts as the Electrophile in catalysis. The active-site Proton acceptor is glutamate 183. Residues glycine 189, serine 227, and 248–249 (GG) each bind substrate.

Belongs to the triosephosphate isomerase family. In terms of assembly, homodimer.

Its subcellular location is the cytoplasm. The catalysed reaction is D-glyceraldehyde 3-phosphate = dihydroxyacetone phosphate. It functions in the pathway carbohydrate biosynthesis; gluconeogenesis. The protein operates within carbohydrate degradation; glycolysis; D-glyceraldehyde 3-phosphate from glycerone phosphate: step 1/1. In terms of biological role, involved in the gluconeogenesis. Catalyzes stereospecifically the conversion of dihydroxyacetone phosphate (DHAP) to D-glyceraldehyde-3-phosphate (G3P). In Psychrobacter arcticus (strain DSM 17307 / VKM B-2377 / 273-4), this protein is Triosephosphate isomerase.